A 147-amino-acid polypeptide reads, in one-letter code: Large ribosomal subunit protein bL9 (147 aa).

This sequence belongs to the bacterial ribosomal protein bL9 family.

Its function is as follows. Binds to the 23S rRNA. The polypeptide is Large ribosomal subunit protein bL9 (Caldanaerobacter subterraneus subsp. tengcongensis (strain DSM 15242 / JCM 11007 / NBRC 100824 / MB4) (Thermoanaerobacter tengcongensis)).